Reading from the N-terminus, the 224-residue chain is Ribosomal RNA small subunit methyltransferase G (224 aa).

S-adenosyl-L-methionine-binding positions include G69, L74, 119-120, and R137; that span reads AE.

Belongs to the methyltransferase superfamily. RNA methyltransferase RsmG family.

The protein resides in the cytoplasm. Its function is as follows. Specifically methylates the N7 position of guanine in position 518 of 16S rRNA. The polypeptide is Ribosomal RNA small subunit methyltransferase G (Mycobacterium bovis (strain ATCC BAA-935 / AF2122/97)).